A 1308-amino-acid polypeptide reads, in one-letter code: Contactin-associated protein-like 4 (1308 aa).

The signal sequence occupies residues 1-25 (MGSVTGAVLKTLLLLSTQNWNRVEA). At 26–1241 (GNSYDCDDPL…LANAIKSDSA (1216 aa)) the chain is on the extracellular side. The F5/8 type C domain maps to 31-177 (CDDPLVSALP…IGMRIEVFGC (147 aa)). Residues Cys-31 and Cys-177 are joined by a disulfide bond. Laminin G-like domains follow at residues 212 to 364 (FKTM…SFSC) and 398 to 547 (FRTW…IDSC). N-linked (GlcNAc...) asparagine glycans are attached at residues Asn-260, Asn-285, Asn-359, and Asn-538. Disulfide bonds link Cys-332-Cys-364, Cys-515-Cys-547, Cys-553-Cys-564, and Cys-558-Cys-573. In terms of domain architecture, EGF-like 1 spans 549-586 (ISDRCLPNYCEHGGECSQSWSTFHCNCTNTGYRGATCH). A glycan (N-linked (GlcNAc...) asparagine) is linked at Asn-574. A disulfide bridge links Cys-575 with Cys-585. The Fibrinogen C-terminal domain maps to 587-792 (NSIYEQSCEA…LLCQGDRSFW (206 aa)). Asn-602, Asn-625, Asn-637, Asn-706, and Asn-748 each carry an N-linked (GlcNAc...) asparagine glycan. The Laminin G-like 3 domain occupies 793-957 (NSASFDTEAS…AQVTPEVQPG (165 aa)). 4 disulfides stabilise this stretch: Cys-931/Cys-958, Cys-962/Cys-975, Cys-969/Cys-984, and Cys-986/Cys-996. In terms of domain architecture, EGF-like 2 spans 958-997 (CRGHCSSYGKLCRNGGKCRERPIGFFCDCTFSAYTGPFCS). Residues Asn-1023 and Asn-1073 are each glycosylated (N-linked (GlcNAc...) asparagine). The 157-residue stretch at 1046–1202 (FRTTRTPSLL…VTGHVTESSC (157 aa)) folds into the Laminin G-like 4 domain. Cys-1167 and Cys-1202 form a disulfide bridge. Residues 1242 to 1262 (VIGGLIAVVIFILLCITAIAV) form a helical membrane-spanning segment. The Cytoplasmic portion of the chain corresponds to 1263-1308 (RIYQQKRLYKRSEAKRSENVDSAEAVLKSELNIQNAVNENQKEYFF).

Belongs to the neurexin family. Interacts with TIAM1.

It localises to the presynaptic cell membrane. In terms of biological role, presynaptic protein involved in both dopaminergic synaptic transmission and GABAergic system, thereby participating in the structural maturation of inhibitory interneuron synapses. Involved in the dopaminergic synaptic transmission by attenuating dopamine release through a presynaptic mechanism. Also participates in the GABAergic system. The polypeptide is Contactin-associated protein-like 4 (CNTNAP4) (Homo sapiens (Human)).